A 902-amino-acid polypeptide reads, in one-letter code: Glutamate receptor 4 (902 aa).

A signal peptide spans 1–20 (MRIICRQIVLLFSGFWGLAM). The Extracellular segment spans residues 22–544 (AFPSSVQIGG…GVFSFLDPLA (523 aa)). N-linked (GlcNAc...) asparagine glycosylation is found at N52, N56, N258, N371, N407, and N414. A disulfide bridge connects residues C84 and C331. Positions 500, 502, and 507 each coordinate L-glutamate. A helical transmembrane segment spans residues 545-565 (YEIWMCIVFAYIGVSVVLFLV). Residues 566-592 (SRFSPYEWHTEEPEDGKEGPSDQPPNE) lie on the Cytoplasmic side of the membrane. Residues 593–608 (FGIFNSLWFSLGAFMQ) constitute an intramembrane region (helical; Pore-forming). The stretch at 609-611 (QGC) is an intramembrane region. C611 carries S-palmitoyl cysteine lipidation. Over 612–617 (DISPRS) the chain is Cytoplasmic. A helical membrane pass occupies residues 618 to 638 (LSGRIVGGVWWFFTLIIISSY). At 639–813 (TANLAAFLTV…DKTSALSLSN (175 aa)) the chain is on the extracellular side. L-glutamate-binding residues include S676, T677, and E727. A disulfide bond links C740 and C795. The helical transmembrane segment at 814 to 834 (VAGVFYILVGGLGLAMLVALI) threads the bilayer. At 835–902 (EFCYKSRAEA…GLAVIASDLP (68 aa)) the chain is on the cytoplasmic side. A lipid anchor (S-palmitoyl cysteine) is attached at C837. S862 carries the post-translational modification Phosphoserine; by PKC/PRKCG.

The protein belongs to the glutamate-gated ion channel (TC 1.A.10.1) family. GRIA4 subfamily. In terms of assembly, homotetramer or heterotetramer of pore-forming glutamate receptor subunits. Tetramers may be formed by the dimerization of dimers. Interacts with EPB41L1 via its C-terminus. Isoform 3 interacts with PICK1. Found in a complex with GRIA1, GRIA2, GRIA3, CNIH2, CNIH3, CACNG2, CACNG3, CACNG4, CACNG5, CACNG7 and CACNG8. Interacts with CACNG5 and PRKCG. Found in a complex with GRIA1, GRIA2, GRIA3, DLG4, CACNG8 and CNIH2. In terms of processing, palmitoylated. Depalmitoylated upon L-glutamate stimulation. ZDHHC3/GODZ specifically palmitoylates Cys-611, which leads to Golgi retention and decreased cell surface expression. In contrast, Cys-837 palmitoylation does not affect cell surface expression but regulates stimulation-dependent endocytosis. Phosphorylated at Ser-862 by PRKCG; phosphorylation increases plasma membrane-associated GRI4 expression. Detected in cerebellum.

It is found in the cell membrane. It localises to the postsynaptic cell membrane. Its subcellular location is the cell projection. The protein localises to the dendrite. The enzyme catalyses Ca(2+)(in) = Ca(2+)(out). The catalysed reaction is Na(+)(in) = Na(+)(out). It carries out the reaction Mg(2+)(in) = Mg(2+)(out). In terms of biological role, ionotropic glutamate receptor that functions as a ligand-gated cation channel, gated by L-glutamate and glutamatergic agonists such as alpha-amino-3-hydroxy-5-methyl-4-isoxazolepropionic acid (AMPA), quisqualic acid, and kainic acid. L-glutamate acts as an excitatory neurotransmitter at many synapses in the central nervous system and plays an important role in fast excitatory synaptic transmission. Binding of the excitatory neurotransmitter L-glutamate induces a conformation change, leading to the opening of the cation channel, and thereby converts the chemical signal to an electrical impulse upon entry of monovalent and divalent cations such as sodium and calcium. The receptor then desensitizes rapidly and enters a transient inactive state, characterized by the presence of bound agonist. In the presence of CACNG8, shows resensitization which is characterized by a delayed accumulation of current flux upon continued application of L-glutamate. The polypeptide is Glutamate receptor 4 (Rattus norvegicus (Rat)).